The chain runs to 614 residues: MRGRVSPLMLLLGILVLASVSATQAKSPYRKTENPCAQRCLQSCQQEPDDLKQKACESRCTKLEYDPRCVYDTGATNQRHPPGERTRGRQPGDYDDDRRQPRREEGGRWGPAEPREREREEDWRQPREDWRRPSHQQPRKIRPEGREGEQEWGTPGSEVREETSRNNPFYFPSRRFSTRYGNQNGRIRVLQRFDQRSKQFQNLQNHRIVQIEARPNTLVLPKHADADNILVIQQGQATVTVANGNNRKSFNLDEGHALRIPSGFISYILNRHDNQNLRVAKISMPVNTPGQFEDFFPASSRDQSSYLQGFSRNTLEAAFNAEFNEIRRVLLEENAGGEQEERGQRRRSTRSSDNEGVIVKVSKEHVQELTKHAKSVSKKGSEEEDITNPINLRDGEPDLSNNFGRLFEVKPDKKNPQLQDLDMMLTCVEIKEGALMLPHFNSKAMVIVVVNKGTGNLELVAVRKEQQQRGRREQEWEEEEEDEEEEGSNREVRRYTARLKEGDVFIMPAAHPVAINASSELHLLGFGINAENNHRIFLAGDKDNVIDQIEKQAKDLAFPGSGEQVEKLIKNQRESHFVSARPQSQSPSSPEKEDQEEENQGGKGPLLSILKAFN.

A signal peptide spans 1-25; it reads MRGRVSPLMLLLGILVLASVSATQA. Disordered stretches follow at residues 72–177, 334–356, 372–397, and 464–491; these read DTGA…RRFS, NAGG…DNEG, HAKS…DGEP, and KEQQ…SNRE. Positions 81-132 are enriched in basic and acidic residues; sequence PPGERTRGRQPGDYDDDRRQPRREEGGRWGPAEPREREREEDWRQPREDWRR. In terms of domain architecture, Cupin type-1 1 spans 169-327; it reads FYFPSRRFST…AFNAEFNEIR (159 aa). The Cupin type-1 2 domain maps to 390–566; sequence INLRDGEPDL…AFPGSGEQVE (177 aa). Residues 464–474 show a composition bias toward basic and acidic residues; sequence KEQQQRGRREQ. Residues 475-486 show a composition bias toward acidic residues; it reads EWEEEEEDEEEE. N-linked (GlcNAc...) asparagine glycosylation occurs at N516. Residues 572-614 form a disordered region; sequence QRESHFVSARPQSQSPSSPEKEDQEEENQGGKGPLLSILKAFN.

It belongs to the 7S seed storage protein family.

The protein is Allergen Ara h 1, clone P17 of Arachis hypogaea (Peanut).